The following is a 300-amino-acid chain: Nucleotide-binding protein TM1040_2438 (300 aa).

Residue 24-31 (GPSGAGRT) participates in ATP binding. 71 to 74 (DPRN) lines the GTP pocket.

This sequence belongs to the RapZ-like family.

Displays ATPase and GTPase activities. The chain is Nucleotide-binding protein TM1040_2438 from Ruegeria sp. (strain TM1040) (Silicibacter sp.).